Consider the following 291-residue polypeptide: Formamidopyrimidine-DNA glycosylase (291 aa).

Pro2 functions as the Schiff-base intermediate with DNA in the catalytic mechanism. The active-site Proton donor is Glu3. The active-site Proton donor; for beta-elimination activity is Lys58. DNA contacts are provided by His104, Arg127, and Arg172. Residues 257-291 (FVYDRAGLPCRACGTPIRQIVQGQRSTFCCPTCQR) form an FPG-type zinc finger. Arg281 functions as the Proton donor; for delta-elimination activity in the catalytic mechanism.

This sequence belongs to the FPG family. Monomer. The cofactor is Zn(2+).

The enzyme catalyses Hydrolysis of DNA containing ring-opened 7-methylguanine residues, releasing 2,6-diamino-4-hydroxy-5-(N-methyl)formamidopyrimidine.. It carries out the reaction 2'-deoxyribonucleotide-(2'-deoxyribose 5'-phosphate)-2'-deoxyribonucleotide-DNA = a 3'-end 2'-deoxyribonucleotide-(2,3-dehydro-2,3-deoxyribose 5'-phosphate)-DNA + a 5'-end 5'-phospho-2'-deoxyribonucleoside-DNA + H(+). Involved in base excision repair of DNA damaged by oxidation or by mutagenic agents. Acts as a DNA glycosylase that recognizes and removes damaged bases. Has a preference for oxidized purines, such as 7,8-dihydro-8-oxoguanine (8-oxoG). Has AP (apurinic/apyrimidinic) lyase activity and introduces nicks in the DNA strand. Cleaves the DNA backbone by beta-delta elimination to generate a single-strand break at the site of the removed base with both 3'- and 5'-phosphates. This is Formamidopyrimidine-DNA glycosylase from Ralstonia pickettii (strain 12J).